A 243-amino-acid chain; its full sequence is Ribosomal RNA small subunit methyltransferase G (243 aa).

Residues glycine 79, phenylalanine 84, 130-131, and arginine 150 contribute to the S-adenosyl-L-methionine site; that span reads AE. The tract at residues 219–243 is disordered; it reads EKKKQTPNKYPRKPGTPGKDPIGKK.

The protein belongs to the methyltransferase superfamily. RNA methyltransferase RsmG family.

The protein localises to the cytoplasm. In terms of biological role, specifically methylates the N7 position of a guanine in 16S rRNA. The protein is Ribosomal RNA small subunit methyltransferase G of Pediococcus pentosaceus (strain ATCC 25745 / CCUG 21536 / LMG 10740 / 183-1w).